The following is a 1210-amino-acid chain: ATPase family AAA domain-containing protein At1g05910 (1210 aa).

The span at 1-11 shows a compositional bias: polar residues; the sequence is MHPKRSSQGDG. Disordered regions lie at residues 1-32 and 63-291; these read MHPK…LHGR and LHKG…RTDD. Positions 97-109 are enriched in acidic residues; sequence DYTDSSGAEDEDM. The span at 130 to 146 shows a compositional bias: basic and acidic residues; the sequence is SRKDMDAELAPRREGLR. Over residues 167–226 the composition is skewed to acidic residues; sequence DTSEEKDGQDETENGNELDDADDGENEVEAEDEGNGEDEGDGEDEGEEDGDDDEEGDEEQ. A compositionally biased stretch (basic and acidic residues) spans 227 to 244; that stretch reads EGRKRYDLRNRAEVRRMP. Residues 276–286 are compositionally biased toward basic residues; the sequence is GGSRPHKRHRF. 422–429 serves as a coordination point for ATP; it reads GPPGTGKT. The interval 856–883 is disordered; sequence LNGKPDGPQPLPELPKVPKEPTGPKPAE. A Bromo domain is found at 897–1000; the sequence is RLRMCLRDVC…DVVHGMLSQM (104 aa). A compositionally biased stretch (basic and acidic residues) spans 1057–1070; that stretch reads DRDYEGLKKPKKTT. The segment at 1057-1151 is disordered; sequence DRDYEGLKKP…EISSRTESVK (95 aa). Over residues 1080–1090 the composition is skewed to polar residues; the sequence is DKSQNQDSGQE. Composition is skewed to basic and acidic residues over residues 1108–1123 and 1138–1151; these read DGDR…KEAS and KSDK…ESVK.

This sequence belongs to the AAA ATPase family.

The protein is ATPase family AAA domain-containing protein At1g05910 of Arabidopsis thaliana (Mouse-ear cress).